The primary structure comprises 477 residues: Argininosuccinate lyase (477 aa).

Belongs to the lyase 1 family. Argininosuccinate lyase subfamily.

It localises to the cytoplasm. It catalyses the reaction 2-(N(omega)-L-arginino)succinate = fumarate + L-arginine. The protein operates within amino-acid biosynthesis; L-arginine biosynthesis; L-arginine from L-ornithine and carbamoyl phosphate: step 3/3. The protein is Argininosuccinate lyase of Corynebacterium efficiens (strain DSM 44549 / YS-314 / AJ 12310 / JCM 11189 / NBRC 100395).